Reading from the N-terminus, the 1853-residue chain is DNA-directed RNA polymerase II subunit RPB1 (1853 aa).

Positions 66, 69, 76, 79, 106, 109, 149, and 177 each coordinate Zn(2+). Residues 256 to 268 form a lid loop region; that stretch reads PAVVTFGSAKNQD. Residues 314–331 are rudder loop; sequence NCIPGLPTATQKGGRPLK. Mg(2+) is bound by residues Asp489, Asp491, and Asp493. The segment at 827 to 839 is bridging helix; that stretch reads PSEFFFHAMGGRE. Residue Lys1260 forms a Glycyl lysine isopeptide (Lys-Gly) (interchain with G-Cter in ubiquitin) linkage. 2 disordered regions span residues 1520 to 1568 and 1589 to 1853; these read PWSP…PRTP and SPHY…DPQN. Composition is skewed to low complexity over residues 1589 to 1811 and 1821 to 1853; these read SPHY…TPSP and YSPS…DPQN. 26 consecutive repeat copies span residues 1592-1598, 1599-1605, 1616-1622, 1623-1629, 1630-1636, 1637-1643, 1644-1650, 1651-1657, 1658-1664, 1665-1671, 1679-1685, 1686-1692, 1693-1699, 1700-1706, 1707-1713, 1717-1723, 1724-1730, 1731-1737, 1752-1758, 1759-1765, 1779-1785, 1786-1792, 1800-1806, 1821-1827, 1828-1834, and 1842-1848. Residues 1592-1848 are C-terminal domain (CTD); 26 X 7 AA approximate tandem repeats of Y-[ST]-P-[ST]-S-P-[AGKNQRST]; sequence YSPTSPSYSP…SPSYSPSSPT (257 aa).

The protein belongs to the RNA polymerase beta' chain family. In terms of assembly, component of the RNA polymerase II (Pol II) complex consisting of 12 subunits. Interacts with sig-7. Post-translationally, the tandem 7 residues repeats in the C-terminal domain (CTD) can be highly phosphorylated. The phosphorylation activates Pol II. Phosphorylation occurs mainly at residues 'Ser-2' and 'Ser-5' of the heptapeptide repeat and starts at the 3- to 4-cell embryonic stage. This phosphorylation also occurs in the early stages of oocyte development and is not detected in oocytes arrested at the meiotic diakinesis stage. In the somatic lineage, phosphorylation at 'Ser-2' is mediated by cdk-12 downstream of cdk-9 whereas in the germline lineage cdk-12 phosphorylates 'Ser-2' independently of cdk-9. Phosphorylation is likely mediated by cdk-7. May be dephosphorylated by fcp-1 in diakinetic oocytes and in 1-cell and 2-cell embryos. Dephosphorylated at 'Ser-5' of the heptapeptide repeat by ssup-72. The phosphorylation state is believed to result from the balanced action of site-specific CTD kinases and phosphatase, and a 'CTD code' that specifies the position of Pol II within the transcription cycle has been proposed. Following transcription stress, the elongating form of RNA polymerase II (RNA pol IIo) is polyubiquitinated via 'Lys-63'-linkages on Lys-1260 at DNA damage sites without leading to degradation: ubiquitination promotes RNA pol IIo backtracking to allow access by the transcription-coupled nucleotide excision repair (TC-NER) machinery. Subsequent DEF1-dependent polyubiquitination by the elongin complex via 'Lys-48'-linkages may lead to proteasome-mediated degradation; presumably at stalled RNA pol II where TC-NER has failed, to halt global transcription and enable 'last resort' DNA repair pathways.

It localises to the nucleus. The protein localises to the chromosome. The catalysed reaction is RNA(n) + a ribonucleoside 5'-triphosphate = RNA(n+1) + diphosphate. Functionally, DNA-dependent RNA polymerase catalyzes the transcription of DNA into RNA using the four ribonucleoside triphosphates as substrates. Largest and catalytic component of RNA polymerase II which synthesizes mRNA precursors and many functional non-coding RNAs. Forms the polymerase active center together with the second largest subunit. Pol II is the central component of the basal RNA polymerase II transcription machinery. It is composed of mobile elements that move relative to each other. RPB1 is part of the core element with the central large cleft, the clamp element that moves to open and close the cleft and the jaws that are thought to grab the incoming DNA template. At the start of transcription, a single-stranded DNA template strand of the promoter is positioned within the central active site cleft of Pol II. A bridging helix emanates from RPB1 and crosses the cleft near the catalytic site and is thought to promote translocation of Pol II by acting as a ratchet that moves the RNA-DNA hybrid through the active site by switching from straight to bent conformations at each step of nucleotide addition. During transcription elongation, Pol II moves on the template as the transcript elongates. Elongation is influenced by the phosphorylation status of the C-terminal domain (CTD) of Pol II largest subunit (RPB1), which serves as a platform for assembly of factors that regulate transcription initiation, elongation, termination and mRNA processing. Involved in the transcription of several genes including those involved in embryogenesis. The sequence is that of DNA-directed RNA polymerase II subunit RPB1 from Caenorhabditis briggsae.